The following is a 552-amino-acid chain: Putative transport protein APJL_0985 (552 aa).

Transmembrane regions (helical) follow at residues 4 to 24 (IAIIVSLLSLVAVLGLWIGHI), 29 to 49 (VGLGIGGVLFGGIIISHCTHL), 65 to 85 (FGLILFVYSIGIQVGPGFFAS), 95 to 115 (GFAVMIVGLSGILVALIHKLF), and 161 to 181 (IAYPFGIIGILLSMWLIRIIF). RCK C-terminal domains lie at 190–275 (QEFD…ILGE) and 277–360 (ADVS…IIGD). A run of 6 helical transmembrane segments spans residues 370-390 (MLPIFLGIGLGVLLGSLPLYL), 403-425 (GGPLVVALILARIGSIGKLYWFM), 438-458 (IVLFLSVVGLKAGANFLDTLL), 463-483 (LAWMGYGAIITFIPLIVTGFV), 492-512 (YLSLCGLLSGAMTDPPALAFA), and 529-549 (VYPLVMFLRIILPQLLAILLW).

It belongs to the AAE transporter (TC 2.A.81) family. YidE subfamily.

Its subcellular location is the cell membrane. This chain is Putative transport protein APJL_0985, found in Actinobacillus pleuropneumoniae serotype 3 (strain JL03).